Here is a 514-residue protein sequence, read N- to C-terminus: Membrane-bound lytic murein transglycosylase F (514 aa).

The N-terminal stretch at 1 to 30 (MKKLKINYLFIGILTLLLAAALWPSIPWFG) is a signal peptide. Residues 31–269 (KTENHIAAIQ…RIEEKYLGHG (239 aa)) are non-LT domain. An LT domain region spans residues 270-514 (DDFDYVDTRS…LFTPQKKEEK (245 aa)). Glu314 is an active-site residue.

It in the N-terminal section; belongs to the bacterial solute-binding protein 3 family. The protein in the C-terminal section; belongs to the transglycosylase Slt family.

The protein resides in the cell outer membrane. It carries out the reaction Exolytic cleavage of the (1-&gt;4)-beta-glycosidic linkage between N-acetylmuramic acid (MurNAc) and N-acetylglucosamine (GlcNAc) residues in peptidoglycan, from either the reducing or the non-reducing ends of the peptidoglycan chains, with concomitant formation of a 1,6-anhydrobond in the MurNAc residue.. Its function is as follows. Murein-degrading enzyme that degrades murein glycan strands and insoluble, high-molecular weight murein sacculi, with the concomitant formation of a 1,6-anhydromuramoyl product. Lytic transglycosylases (LTs) play an integral role in the metabolism of the peptidoglycan (PG) sacculus. Their lytic action creates space within the PG sacculus to allow for its expansion as well as for the insertion of various structures such as secretion systems and flagella. The protein is Membrane-bound lytic murein transglycosylase F of Salmonella typhimurium (strain LT2 / SGSC1412 / ATCC 700720).